A 294-amino-acid chain; its full sequence is Putative cuticle collagen 145 (294 aa).

Residues 1–30 (MEKILVTFSTGAASIAVLAVLFTVPSLYNT) form the signal peptide. Over residues 100-112 (TCPPGPPGPPGQP) the composition is skewed to pro residues. 2 disordered regions span residues 100–133 (TCPP…ATFA) and 148–276 (PQGP…LPGN). 2 triple-helical region regions span residues 102–127 (PPGP…KGDD) and 148–277 (PQGP…PGND). 2 stretches are compositionally biased toward low complexity: residues 164–194 (AGPD…NGQP) and 219–265 (APGA…DGQP). The 59-residue stretch at 218–276 (GAPGAPGNAGPAGPAGQDGFPGQDGAPGPAGPAGQDGFPGNAGSDGQPGAPGGPGLPGN) folds into the Collagen-like domain.

It belongs to the cuticular collagen family. Collagen polypeptide chains are complexed within the cuticle by disulfide bonds and other types of covalent cross-links.

Nematode cuticles are composed largely of collagen-like proteins. The cuticle functions both as an exoskeleton and as a barrier to protect the worm from its environment. The protein is Putative cuticle collagen 145 (col-145) of Caenorhabditis elegans.